The following is a 290-amino-acid chain: MVVLHVKRGDESQFLLQAPGSTELEELTAQVTRVYNGRLKVHRLCTEIEELAEHGVFLPPNMQGLTDEQIEELKLKDEWGEKCVPSGGSVFTKDDIGRRNGHAPNEKMKQVLKKTVEEAKAMVSKKQVEAGVFVTMEMVKDALDQLRGAVMIVYPMGLPPYDPIRMEFENKEDLSGTQAALEVIQESEAQLWWAAKELRRTKKLSDYVGKNEKTKIIVKIQQRGQGAPAREPLISSEEHKQLMLFYHRRQEELKKLEENDDDSCLNSPWADNTALKRHFHGVKDIKWRPR.

Belongs to the CFAP298 family. As to quaternary structure, interacts with ZMYND10. As to expression, expressed in the trachea (at protein level).

Its subcellular location is the cytoplasm. It localises to the cytoskeleton. The protein localises to the cilium basal body. Functionally, plays a role in motile cilium function, possibly by acting on outer dynein arm assembly. Seems to be important for initiation rather than maintenance of cilium motility. Required for correct positioning of cilia at the apical cell surface, suggesting an additional role in the planar cell polarity (PCP) pathway. May suppress canonical Wnt signaling activity. The protein is Cilia- and flagella-associated protein 298 of Rattus norvegicus (Rat).